Reading from the N-terminus, the 206-residue chain is Small ribosomal subunit protein uS4 (206 aa).

The region spanning 96-168 (SRLDNVVYRM…LELAEQREKP (73 aa)) is the S4 RNA-binding domain.

It belongs to the universal ribosomal protein uS4 family. In terms of assembly, part of the 30S ribosomal subunit. Contacts protein S5. The interaction surface between S4 and S5 is involved in control of translational fidelity.

In terms of biological role, one of the primary rRNA binding proteins, it binds directly to 16S rRNA where it nucleates assembly of the body of the 30S subunit. Its function is as follows. With S5 and S12 plays an important role in translational accuracy. In Baumannia cicadellinicola subsp. Homalodisca coagulata, this protein is Small ribosomal subunit protein uS4.